We begin with the raw amino-acid sequence, 1099 residues long: SLIT-ROBO Rho GTPase-activating protein 3 (1099 aa).

The region spanning 19–314 is the F-BAR domain; that stretch reads AQIKEIRTQL…AVDNLDSRSD (296 aa). The stretch at 352–392 forms a coiled coil; the sequence is QTELLMRYHQLQSRLATLKIENEEVRKTLDATMQTLQDMLT. The interval 470–493 is disordered; sequence GERAECGTTRPPCLPPKPQKMRRP. A Rho-GAP domain is found at 506-694; sequence GSMEAFIKDS…TIIIHHEAIF (189 aa). Residues 744–803 form the SH3 domain; sequence VEQIEAIAKFDYVGRSPRELSFKKGASLLLYHRASEDWWEGRHNGVDGLIPHQYIVVQDM. Positions 809 to 820 are enriched in polar residues; that stretch reads DSLSQKADSEAS. Positions 809 to 846 are disordered; it reads DSLSQKADSEASSGPLLDDKASSKNDLQSPTEHISDYG. A phosphoserine mark is found at Ser817, Ser820, Ser821, Ser837, and Ser858. The interval 861–911 is disordered; sequence AAIPRRRSGGDTHSPPRGLGPSIDTPPRAAACPSSPHKIPLSRGRIESPEK. Residues 952–987 are a coiled coil; it reads HKSLEAEALAEDIEKTMSTALHELRELERQNTVKQA. The residue at position 954 (Ser954) is a Phosphoserine. Disordered regions lie at residues 994-1014 and 1045-1099; these read TLEPLKNPPGPISSEPASPLH and ARLA…SGTM. A compositionally biased stretch (low complexity) spans 1060-1074; sequence VRPVVQHRSSSSSSS. Over residues 1089-1099 the composition is skewed to polar residues; that stretch reads PNSSSDKSGTM.

As to quaternary structure, homodimer. Forms a heterooligomer with SRGAP1 and SRGAP2 through its F-BAR domain. Interacts with WASF1. Probably interacts with ROBO1. Interacts with FASLG.

Its function is as follows. GTPase-activating protein for RAC1 and perhaps CDC42, but not for RhoA small GTPase. May attenuate RAC1 signaling in neurons. The sequence is that of SLIT-ROBO Rho GTPase-activating protein 3 (Srgap3) from Mus musculus (Mouse).